The sequence spans 798 residues: Phenylalanine--tRNA ligase beta subunit (798 aa).

The region spanning 39 to 148 is the tRNA-binding domain; that stretch reads FDAIEPIVVG…ESFRIGARLV (110 aa). A B5 domain is found at 402–478; it reads WQAPVLRFRR…RVRGMDTIEP (77 aa). Asp456, Asp462, Glu465, and Glu466 together coordinate Mg(2+). The region spanning 708-798 is the FDX-ACB domain; sequence PVYPPVRRDI…SLVEKLPVRI (91 aa).

Belongs to the phenylalanyl-tRNA synthetase beta subunit family. Type 1 subfamily. As to quaternary structure, tetramer of two alpha and two beta subunits. Mg(2+) serves as cofactor.

It localises to the cytoplasm. It catalyses the reaction tRNA(Phe) + L-phenylalanine + ATP = L-phenylalanyl-tRNA(Phe) + AMP + diphosphate + H(+). The polypeptide is Phenylalanine--tRNA ligase beta subunit (Nitratidesulfovibrio vulgaris (strain ATCC 29579 / DSM 644 / CCUG 34227 / NCIMB 8303 / VKM B-1760 / Hildenborough) (Desulfovibrio vulgaris)).